A 262-amino-acid chain; its full sequence is Octopine permease ATP-binding protein P (262 aa).

The ABC transporter domain occupies 9–254 (VKLTGIRKNF…PRTERFRQFL (246 aa)). 41-48 (GSSGSGKS) contacts ATP.

This sequence belongs to the ABC transporter superfamily.

It localises to the cell inner membrane. Component of the octopine active transport system probably consisting of four subunits: Q, M, P and T. The protein is Octopine permease ATP-binding protein P (occP) of Rhizobium meliloti (Ensifer meliloti).